Reading from the N-terminus, the 336-residue chain is TBC1 domain family member 21 (336 aa).

One can recognise a Rab-GAP TBC domain in the interval G57 to K265.

Interacts with ACTB. Interacts with ARMC12, TOMM20, DNAH7 and RAP1A. Interacts with RAB10. Expressed in round and elongated spermatids (at protein level). Expressed specifically in adult testis and very weakly in fetal brain.

The protein resides in the cytoplasmic vesicle. It is found in the secretory vesicle. It localises to the acrosome. The protein localises to the cytoplasm. Its subcellular location is the cytoskeleton. Its function is as follows. Acts as a GTPase-activating protein for Rab family protein(s). Essential for the establishment of male fertility, and is required for both the production of normal sperm number and sperm function. Plays an important role in the formation of intact mitochondria, outer dense fibers and axoneme within the sperm tail. Essential for sperm mitochondrial sheath formation and for the interactions of ARMC12 with VDAC2 and VDAC3. May be involved in acrosome formation and cytoskeletal reorganization during spermiogenesis, possibly by regulating RAB3A activity. This is TBC1 domain family member 21 (TBC1D21) from Homo sapiens (Human).